We begin with the raw amino-acid sequence, 117 residues long: Large ribosomal subunit protein bL20 (117 aa).

Belongs to the bacterial ribosomal protein bL20 family.

Functionally, binds directly to 23S ribosomal RNA and is necessary for the in vitro assembly process of the 50S ribosomal subunit. It is not involved in the protein synthesizing functions of that subunit. This Gloeothece citriformis (strain PCC 7424) (Cyanothece sp. (strain PCC 7424)) protein is Large ribosomal subunit protein bL20.